We begin with the raw amino-acid sequence, 309 residues long: Glutaminase (309 aa).

The substrate site is built by serine 65, asparagine 117, glutamate 162, asparagine 169, tyrosine 193, tyrosine 245, and valine 263.

The protein belongs to the glutaminase family. As to quaternary structure, homotetramer.

The catalysed reaction is L-glutamine + H2O = L-glutamate + NH4(+). The protein is Glutaminase of Bacillus cereus (strain ATCC 10987 / NRS 248).